The primary structure comprises 144 residues: Cytochrome c oxidase subunit 4 isoform 1, mitochondrial (144 aa).

Residues 1–73 (SVVKSEDFTL…SFAEMNRRSN (73 aa)) are Mitochondrial matrix-facing. Lys-4 is modified (N6-acetyllysine; alternate). An N6-succinyllysine; alternate modification is found at Lys-4. Lys-28 is modified (N6-acetyllysine). Phosphoserine occurs at positions 31 and 33. Lys-35 carries the N6-acetyllysine; alternate modification. Residue Lys-35 is modified to N6-succinyllysine; alternate. Lys-42 carries the N6-acetyllysine modification. Residues 74-99 (EWKTVVGTAMFFFGITALIVMWEKRY) traverse the membrane as a helical segment. Topologically, residues 100 to 144 (VYGPLPQTFDKEWVAMQTKRMLDMKVNPIQGLASKWDYEKNEWKK) are mitochondrial intermembrane.

This sequence belongs to the cytochrome c oxidase IV family. Component of the cytochrome c oxidase (complex IV, CIV), a multisubunit enzyme composed of 14 subunits. The complex is composed of a catalytic core of 3 subunits MT-CO1, MT-CO2 and MT-CO3, encoded in the mitochondrial DNA, and 11 supernumerary subunits COX4I, COX5A, COX5B, COX6A, COX6B, COX6C, COX7A, COX7B, COX7C, COX8 and NDUFA4, which are encoded in the nuclear genome. The complex exists as a monomer or a dimer and forms supercomplexes (SCs) in the inner mitochondrial membrane with NADH-ubiquinone oxidoreductase (complex I, CI) and ubiquinol-cytochrome c oxidoreductase (cytochrome b-c1 complex, complex III, CIII), resulting in different assemblies (supercomplex SCI(1)III(2)IV(1) and megacomplex MCI(2)III(2)IV(2)). Interacts with PHB2; the interaction decreases in absence of SPHK2. Interacts with AFG1L. Interacts with ABCB7; this interaction allows the regulation of cellular iron homeostasis and cellular reactive oxygen species (ROS) levels in cardiomyocytes. Interacts with FLVCR2; this interaction occurs in the absence of heme and is disrupted upon heme binding. Interacts with IRGC.

It is found in the mitochondrion inner membrane. It functions in the pathway energy metabolism; oxidative phosphorylation. Component of the cytochrome c oxidase, the last enzyme in the mitochondrial electron transport chain which drives oxidative phosphorylation. The respiratory chain contains 3 multisubunit complexes succinate dehydrogenase (complex II, CII), ubiquinol-cytochrome c oxidoreductase (cytochrome b-c1 complex, complex III, CIII) and cytochrome c oxidase (complex IV, CIV), that cooperate to transfer electrons derived from NADH and succinate to molecular oxygen, creating an electrochemical gradient over the inner membrane that drives transmembrane transport and the ATP synthase. Cytochrome c oxidase is the component of the respiratory chain that catalyzes the reduction of oxygen to water. Electrons originating from reduced cytochrome c in the intermembrane space (IMS) are transferred via the dinuclear copper A center (CU(A)) of subunit 2 and heme A of subunit 1 to the active site in subunit 1, a binuclear center (BNC) formed by heme A3 and copper B (CU(B)). The BNC reduces molecular oxygen to 2 water molecules using 4 electrons from cytochrome c in the IMS and 4 protons from the mitochondrial matrix. This Theropithecus gelada (Gelada baboon) protein is Cytochrome c oxidase subunit 4 isoform 1, mitochondrial (COX4I1).